Here is a 274-residue protein sequence, read N- to C-terminus: Phloretin hydrolase (274 aa).

Histidine 123, glutamate 154, histidine 251, and glutamate 255 together coordinate Zn(2+).

Belongs to the DAPG/phloretin hydrolase family. Homodimer. It depends on Zn(2+) as a cofactor.

The protein resides in the cytoplasm. It carries out the reaction phloretin + H2O = phloretate + 1,3,5-trihydroxybenzene + H(+). Catalyzes the hydrolytic C-C cleavage of phloretin to phloroglucinol and 3-(4-hydroxyphenyl)propionic acid during flavonoid degradation. Also hydrolyzes other C-acylated phenols. This chain is Phloretin hydrolase (phy), found in Eubacterium ramulus.